The following is a 197-amino-acid chain: Auxin-responsive protein IAA19 (197 aa).

The EAR-like (transcriptional repression) motif lies at 13–17; the sequence is LRLGL. A compositionally biased stretch (polar residues) spans 35–47; that stretch reads MNMTSSGSNSDQC. Positions 35–67 are disordered; sequence MNMTSSGSNSDQCESGVVSSGGDAEKVNDSPAA. The 89-residue stretch at 96 to 184 folds into the PB1 domain; it reads LGYVKVSMDG…KRLRIMKRSD (89 aa).

This sequence belongs to the Aux/IAA family. As to quaternary structure, homodimers and heterodimers. Interacts with the auxin response factor ARF7.

The protein localises to the nucleus. Its function is as follows. Aux/IAA proteins are short-lived transcriptional factors that function as repressors of early auxin response genes at low auxin concentrations. Repression is thought to result from the interaction with auxin response factors (ARFs), proteins that bind to the auxin-responsive promoter element (AuxRE). Formation of heterodimers with ARF proteins may alter their ability to modulate early auxin response genes expression. The sequence is that of Auxin-responsive protein IAA19 (IAA19) from Arabidopsis thaliana (Mouse-ear cress).